The chain runs to 851 residues: Glutathione transporter 1 (851 aa).

A compositionally biased stretch (polar residues) spans 1-14 (MTARNSASIPTSIR). Positions 1-116 (MTARNSASIP…LDNETDSEVE (116 aa)) are disordered. A glycan (N-linked (GlcNAc...) asparagine) is linked at N32. The segment covering 33 to 68 (LSTKTASKTSLTFRQSSSDESTSSYSGNHHNINIQH) has biased composition (low complexity). The segment covering 74–92 (FRTNSSSFSPNDYSISESP) has biased composition (polar residues). Residue N77 is glycosylated (N-linked (GlcNAc...) asparagine). S93 carries the phosphoserine modification. Positions 105–134 (VQLDNETDSEVESEVEELERELEAIEDSVY) form a coiled coil. A glycan (N-linked (GlcNAc...) asparagine) is linked at N109. The next 2 helical transmembrane spans lie at 156–176 (TWVLTTIFVIVFAAVNQFFSL) and 179–199 (PALSISFIVAQLILFPLGKLL). N256 is a glycosylation site (N-linked (GlcNAc...) asparagine). The next 4 helical transmembrane spans lie at 259 to 279 (WGYKILIVLTSQMLGYGFAGL), 282 to 302 (RWIVYPAAMIWPQTLVSTVLF), 333 to 353 (FFAYVMIGSFVFYWFPGFIFK), and 405 to 425 (WVICNTFGSVVLIFWIVVPIL). Residues N452 and N464 are each glycosylated (N-linked (GlcNAc...) asparagine). 5 helical membrane-spanning segments follow: residues 480–500 (YSMSTALNFAAVTAIFTHCAL), 531–551 (APQWWYATLFIVVFGLTIFTV), 560–580 (VWALIVALLIFIVNFIPQGVL), 592–612 (IITELIGGYILPGKPLANLMI), and 642–662 (ILFFVQLFATILGGITQVAVQ). The N-linked (GlcNAc...) asparagine glycan is linked to N691. Transmembrane regions (helical) follow at residues 711–731 (YYPLIFFFLIGAVAPFITWGL), 757–777 (PATGINYSSWAIVGFIFNYVI), and 791–811 (VLAAAMDSGVAVAGVVIFLCV). Residue N843 is glycosylated (N-linked (GlcNAc...) asparagine).

The protein belongs to the oligopeptide OPT transporter family.

The protein localises to the endoplasmic reticulum membrane. It localises to the cell membrane. High-affinity glutathione transporter which plays a role in scavenging glutathione from the extracellular environment for the maintenance of sulfur homeostasis. This is Glutathione transporter 1 (pgt1) from Schizosaccharomyces pombe (strain 972 / ATCC 24843) (Fission yeast).